Here is a 20-residue protein sequence, read N- to C-terminus: Alanine aminotransferase 1 (20 aa).

An N6-(pyridoxal phosphate)lysine modification is found at lysine 11. Lysine 11 carries an N-linked (Glc) (glycation) lysine; in vitro glycan.

The protein belongs to the class-I pyridoxal-phosphate-dependent aminotransferase family. Alanine aminotransferase subfamily. Homodimer. The cofactor is pyridoxal 5'-phosphate. In terms of processing, glycation of Lys-11 inactivates the enzyme.

It is found in the cytoplasm. The catalysed reaction is L-alanine + 2-oxoglutarate = pyruvate + L-glutamate. It participates in amino-acid degradation; L-alanine degradation via transaminase pathway; pyruvate from L-alanine: step 1/1. Its function is as follows. Catalyzes the reversible transamination between alanine and 2-oxoglutarate to form pyruvate and glutamate. Participates in cellular nitrogen metabolism and also in liver gluconeogenesis starting with precursors transported from skeletal muscles. This is Alanine aminotransferase 1 (GPT) from Sus scrofa (Pig).